Here is a 205-residue protein sequence, read N- to C-terminus: Outer-membrane lipoprotein carrier protein (205 aa).

Positions 1–19 (MKKIIICFIFVFSINISFA) are cleaved as a signal peptide.

It belongs to the LolA family. In terms of assembly, monomer.

It localises to the periplasm. Functionally, participates in the translocation of lipoproteins from the inner membrane to the outer membrane. Only forms a complex with a lipoprotein if the residue after the N-terminal Cys is not an aspartate (The Asp acts as a targeting signal to indicate that the lipoprotein should stay in the inner membrane). This Francisella tularensis subsp. novicida (strain U112) protein is Outer-membrane lipoprotein carrier protein.